The sequence spans 201 residues: Large ribosomal subunit protein uL4 (201 aa).

The tract at residues 45-71 (AQKTRAEVTGSGKKPWRQKGTGRARAG) is disordered.

This sequence belongs to the universal ribosomal protein uL4 family. In terms of assembly, part of the 50S ribosomal subunit.

One of the primary rRNA binding proteins, this protein initially binds near the 5'-end of the 23S rRNA. It is important during the early stages of 50S assembly. It makes multiple contacts with different domains of the 23S rRNA in the assembled 50S subunit and ribosome. In terms of biological role, forms part of the polypeptide exit tunnel. This is Large ribosomal subunit protein uL4 from Shewanella loihica (strain ATCC BAA-1088 / PV-4).